We begin with the raw amino-acid sequence, 122 residues long: Large ribosomal subunit protein uL14c (122 aa).

It belongs to the universal ribosomal protein uL14 family. Part of the 50S ribosomal subunit.

It localises to the plastid. It is found in the chloroplast. In terms of biological role, binds to 23S rRNA. The chain is Large ribosomal subunit protein uL14c from Illicium oligandrum (Star anise).